A 540-amino-acid polypeptide reads, in one-letter code: Probable LRR receptor-like serine/threonine-protein kinase RPK1 (540 aa).

The first 19 residues, Met1–Ser19, serve as a signal peptide directing secretion. Over Arg20–Glu198 the chain is Extracellular. LRR repeat units follow at residues Leu118–Leu142 and Lys144–Lys169. A helical transmembrane segment spans residues Ile199–Phe219. The Cytoplasmic segment spans residues Ile220 to Leu540. Thr250 and Thr258 each carry phosphothreonine. The 275-residue stretch at Phe261–Ile535 folds into the Protein kinase domain. ATP is bound by residues Ile267–Thr275 and Lys289. Phosphotyrosine occurs at positions 334 and 372. The active-site Proton acceptor is the Asp385. Position 427 is a phosphotyrosine (Tyr427). Residue Thr435 is modified to Phosphothreonine.

This sequence belongs to the protein kinase superfamily. Ser/Thr protein kinase family. In terms of tissue distribution, expressed in roots, stems, leaves, and flowers.

Its subcellular location is the cell membrane. The catalysed reaction is L-seryl-[protein] + ATP = O-phospho-L-seryl-[protein] + ADP + H(+). The enzyme catalyses L-threonyl-[protein] + ATP = O-phospho-L-threonyl-[protein] + ADP + H(+). Its function is as follows. Involved in the main abscisic acid-mediated (ABA) signaling pathway and in early ABA perception. Together with RPK2, required for pattern formation along the radial axis (e.g. the apical embryonic domain cell types that generate cotyledon primordia), and the apical-basal axis (e.g. differentiation of the basal pole during early embryogenesis). This is Probable LRR receptor-like serine/threonine-protein kinase RPK1 (RPK1) from Arabidopsis thaliana (Mouse-ear cress).